The sequence spans 182 residues: Isopentenyl-diphosphate Delta-isomerase (182 aa).

The Mn(2+) site is built by His25 and His32. The 135-residue stretch at 30 to 164 folds into the Nudix hydrolase domain; the sequence is RLHLAFSSWL…PWAFSPWMVM (135 aa). Cys67 is a catalytic residue. Residue Cys67 coordinates Mg(2+). Position 69 (His69) interacts with Mn(2+). Glu87 lines the Mg(2+) pocket. Mn(2+)-binding residues include Glu114 and Glu116. Glu116 is an active-site residue.

This sequence belongs to the IPP isomerase type 1 family. Homodimer. The cofactor is Mg(2+). Requires Mn(2+) as cofactor.

Its subcellular location is the cytoplasm. It catalyses the reaction isopentenyl diphosphate = dimethylallyl diphosphate. It participates in isoprenoid biosynthesis; dimethylallyl diphosphate biosynthesis; dimethylallyl diphosphate from isopentenyl diphosphate: step 1/1. Functionally, catalyzes the 1,3-allylic rearrangement of the homoallylic substrate isopentenyl (IPP) to its highly electrophilic allylic isomer, dimethylallyl diphosphate (DMAPP). The polypeptide is Isopentenyl-diphosphate Delta-isomerase (Shigella dysenteriae serotype 1 (strain Sd197)).